A 596-amino-acid chain; its full sequence is Phosphoenolpyruvate carboxykinase [GTP] (596 aa).

Substrate contacts are provided by residues arginine 77 and 205–207 (YGG). 2 residues coordinate Mn(2+): lysine 214 and histidine 234. Serine 256 is a substrate binding site. A GTP-binding site is contributed by 257–262 (ACGKTN). Cysteine 258 is a catalytic residue. Aspartate 283 contributes to the Mn(2+) binding site. The segment at 362–388 (KKGSTEKAAHPNSRFTAPAKNNPAISP) is disordered. Residue 373 to 375 (NSR) participates in substrate binding. Residues arginine 375, arginine 406, and 499 to 502 (YGDN) each bind GTP.

Belongs to the phosphoenolpyruvate carboxykinase [GTP] family. Monomer. It depends on Mn(2+) as a cofactor.

The protein resides in the cytoplasm. It catalyses the reaction oxaloacetate + GTP = phosphoenolpyruvate + GDP + CO2. Its pathway is carbohydrate biosynthesis; gluconeogenesis. In terms of biological role, catalyzes the conversion of oxaloacetate (OAA) to phosphoenolpyruvate (PEP), the rate-limiting step in the metabolic pathway that produces glucose from lactate and other precursors derived from the citric acid cycle. The polypeptide is Phosphoenolpyruvate carboxykinase [GTP] (Anaeromyxobacter sp. (strain K)).